A 290-amino-acid chain; its full sequence is Lysine export transcriptional regulatory protein LysG (290 aa).

Residues 1–57 (MNPIQLDTLLSIIDEGSFEGASLALSISPSAVSQRVKALEHHVGRVLVSRTQPAKAT) form the HTH lysR-type domain. The segment at residues 18–37 (FEGASLALSISPSAVSQRVK) is a DNA-binding region (H-T-H motif).

The protein belongs to the LysR transcriptional regulatory family.

Positively regulates the expression of the exporter LysE. Induction requires the presence of a coinducer, which is either intracellular L-lysine, L-arginine or L-citrulline. L-histidine also acts as a coinducer of lysE expression, but this amino acid is not exported by LysE. The lysEG system prevents bacteriostasis due to elevated L-lysine or L-arginine concentrations that arise during growth in the presence of peptides or in mutants possessing a deregulated biosynthesis pathway. The chain is Lysine export transcriptional regulatory protein LysG from Corynebacterium glutamicum (strain ATCC 13032 / DSM 20300 / JCM 1318 / BCRC 11384 / CCUG 27702 / LMG 3730 / NBRC 12168 / NCIMB 10025 / NRRL B-2784 / 534).